Consider the following 237-residue polypeptide: Mediator of RNA polymerase II transcription subunit 20 (237 aa).

It belongs to the Mediator complex subunit 20 family. Component of the Mediator complex.

It localises to the nucleus. Component of the Mediator complex, a coactivator involved in the regulated transcription of nearly all RNA polymerase II-dependent genes. Mediator functions as a bridge to convey information from gene-specific regulatory proteins to the basal RNA polymerase II transcription machinery. Mediator is recruited to promoters by direct interactions with regulatory proteins and serves as a scaffold for the assembly of a functional preinitiation complex with RNA polymerase II and the general transcription factors. The chain is Mediator of RNA polymerase II transcription subunit 20 (SRB2) from Scheffersomyces stipitis (strain ATCC 58785 / CBS 6054 / NBRC 10063 / NRRL Y-11545) (Yeast).